Here is a 191-residue protein sequence, read N- to C-terminus: Protein GrpE (191 aa).

The interval 1–49 (MSEEKQTAEQVEAAEQEEVTEQAEQAASQEQHEETAGQEEALQHQIDEL) is disordered. Residues 12–21 (EAAEQEEVTE) show a composition bias toward acidic residues. Residues 30 to 49 (EQHEETAGQEEALQHQIDEL) show a composition bias toward basic and acidic residues.

This sequence belongs to the GrpE family. As to quaternary structure, homodimer.

The protein resides in the cytoplasm. In terms of biological role, participates actively in the response to hyperosmotic and heat shock by preventing the aggregation of stress-denatured proteins, in association with DnaK and GrpE. It is the nucleotide exchange factor for DnaK and may function as a thermosensor. Unfolded proteins bind initially to DnaJ; upon interaction with the DnaJ-bound protein, DnaK hydrolyzes its bound ATP, resulting in the formation of a stable complex. GrpE releases ADP from DnaK; ATP binding to DnaK triggers the release of the substrate protein, thus completing the reaction cycle. Several rounds of ATP-dependent interactions between DnaJ, DnaK and GrpE are required for fully efficient folding. The protein is Protein GrpE of Bacillus velezensis (strain DSM 23117 / BGSC 10A6 / LMG 26770 / FZB42) (Bacillus amyloliquefaciens subsp. plantarum).